The primary structure comprises 180 residues: Large ribosomal subunit protein uL5 (180 aa).

Belongs to the universal ribosomal protein uL5 family. Part of the 50S ribosomal subunit; part of the 5S rRNA/L5/L18/L25 subcomplex. Contacts the 5S rRNA and the P site tRNA. Forms a bridge to the 30S subunit in the 70S ribosome.

This is one of the proteins that bind and probably mediate the attachment of the 5S RNA into the large ribosomal subunit, where it forms part of the central protuberance. In the 70S ribosome it contacts protein S13 of the 30S subunit (bridge B1b), connecting the 2 subunits; this bridge is implicated in subunit movement. Contacts the P site tRNA; the 5S rRNA and some of its associated proteins might help stabilize positioning of ribosome-bound tRNAs. This Streptococcus pyogenes serotype M49 (strain NZ131) protein is Large ribosomal subunit protein uL5.